The chain runs to 23 residues: Prolamin alpha-3 (23 aa).

The chain is Prolamin alpha-3 from Dactylis glomerata (Orchard grass).